The primary structure comprises 376 residues: UDP-N-acetylglucosamine--N-acetylmuramyl-(pentapeptide) pyrophosphoryl-undecaprenol N-acetylglucosamine transferase (376 aa).

UDP-N-acetyl-alpha-D-glucosamine is bound by residues 12 to 14 (TAG), N126, R163, S198, and Q296.

It belongs to the glycosyltransferase 28 family. MurG subfamily.

It is found in the cell membrane. The enzyme catalyses di-trans,octa-cis-undecaprenyl diphospho-N-acetyl-alpha-D-muramoyl-L-alanyl-D-glutamyl-meso-2,6-diaminopimeloyl-D-alanyl-D-alanine + UDP-N-acetyl-alpha-D-glucosamine = di-trans,octa-cis-undecaprenyl diphospho-[N-acetyl-alpha-D-glucosaminyl-(1-&gt;4)]-N-acetyl-alpha-D-muramoyl-L-alanyl-D-glutamyl-meso-2,6-diaminopimeloyl-D-alanyl-D-alanine + UDP + H(+). The protein operates within cell wall biogenesis; peptidoglycan biosynthesis. Cell wall formation. Catalyzes the transfer of a GlcNAc subunit on undecaprenyl-pyrophosphoryl-MurNAc-pentapeptide (lipid intermediate I) to form undecaprenyl-pyrophosphoryl-MurNAc-(pentapeptide)GlcNAc (lipid intermediate II). This chain is UDP-N-acetylglucosamine--N-acetylmuramyl-(pentapeptide) pyrophosphoryl-undecaprenol N-acetylglucosamine transferase, found in Frankia casuarinae (strain DSM 45818 / CECT 9043 / HFP020203 / CcI3).